The following is a 257-amino-acid chain: Dof zinc finger protein DOF5.3 (257 aa).

The tract at residues 23–50 (LSYSSNPTPLDNDQKKPSPATAVTRPQP) is disordered. The segment covering 24–33 (SYSSNPTPLD) has biased composition (polar residues). Residues 55–109 (LRCPRCDSTNTKFCYYNNYSLTQPRYFCKSCRRYWTKGGTLRNIPVGGGCRKNKR) form a Dof-type zinc finger. The Zn(2+) site is built by C57, C60, C82, and C85. The segment at 104 to 127 (CRKNKRSTSSAARSLRTTPEPASH) is disordered. The segment covering 110-121 (STSSAARSLRTT) has biased composition (low complexity).

As to expression, the PEAR proteins (e.g. DOF2.4, DOF5.1, DOF3.2, DOF1.1, DOF5.6 and DOF5.3) form a short-range concentration gradient that peaks at protophloem sieve elements (PSE). Accumulates in the stele.

It is found in the nucleus. Functionally, transcription factor that binds specifically to a 5'-AA[AG]G-3' consensus core sequence. The PEAR proteins (e.g. DOF2.4, DOF5.1, DOF3.2, DOF1.1, DOF5.6 and DOF5.3) activate gene expression that promotes radial growth of protophloem sieve elements. This is Dof zinc finger protein DOF5.3 from Arabidopsis thaliana (Mouse-ear cress).